The primary structure comprises 409 residues: Broad specificity amino-acid racemase (409 aa).

Residues 1–23 form the signal peptide; the sequence is MPFSRTLLALSLGMALLQNPAFA. The cysteines at positions 70 and 96 are disulfide-linked. K74 serves as the catalytic Proton acceptor. K74 bears the N6-(pyridoxal phosphate)lysine mark. R173 serves as a coordination point for substrate. The active-site Proton acceptor is Y300. Residue M348 coordinates substrate.

Belongs to the alanine racemase family. Bsr subfamily. In terms of assembly, homodimer. The cofactor is pyridoxal 5'-phosphate.

It is found in the periplasm. It carries out the reaction an L-alpha-amino acid = a D-alpha-amino acid. The catalysed reaction is L-lysine = D-lysine. The enzyme catalyses L-arginine = D-arginine. It catalyses the reaction L-ornithine = D-ornithine. It carries out the reaction L-alanine = D-alanine. The catalysed reaction is L-methionine = D-methionine. Functionally, amino-acid racemase able to utilize a broad range of substrates. Is mostly active with lysine and arginine and, to a lesser extent, with ornithine, whereas is about 10 times less active with alanine, methionine and ethionine. With phenylalanine as substrate only a trace activity is detectable, and is inactive with glutamate. Plays a key role in the catabolism of D-arginine and D-lysine, that allows P.taetrolens strain NBRC 3460 to grow on these basic D-amino acids as a sole carbon source. The chain is Broad specificity amino-acid racemase from Pseudomonas taetrolens.